We begin with the raw amino-acid sequence, 466 residues long: Chromogranin-A (466 aa).

The N-terminal stretch at M1 to A18 is a signal peptide. A disulfide bridge links C35 with C56. The interval A91–L443 is disordered. Residues Q92 to Q111 show a composition bias toward low complexity. Phosphoserine is present on S114. Residues K131–Q155 show a composition bias toward basic and acidic residues. Over residues E177–E213 the composition is skewed to polar residues. At S215 the chain carries Phosphoserine. A compositionally biased stretch (acidic residues) spans K233–K247. The segment covering E248–P259 has biased composition (basic and acidic residues). S288 and S312 each carry phosphoserine. Over residues G305–Q314 the composition is skewed to basic and acidic residues. Glycine amide is present on G332. A compositionally biased stretch (basic and acidic residues) spans R351–E378. Residues S353 and S386 each carry the phosphoserine modification. Position 387 is a methionine sulfoxide (M387). The segment covering S412–D440 has biased composition (basic and acidic residues). Phosphoserine occurs at positions 413, 417, and 433. S433 is a glycosylation site (O-linked (Xyl...) (chondroitin sulfate) serine). Pyrrolidone carboxylic acid is present on Q441. S447 carries the post-translational modification Phosphoserine.

Belongs to the chromogranin/secretogranin protein family. As to quaternary structure, self-interacts; self-assembly is promoted in vitro by chondroitin sulfate attachment which occurs at mildly acidic pH conditions. Interacts with SCG3; this interaction is optimal in conditions mimicking the lumenal milieu of the trans-Golgi network, i.e. pH 5.5 and 10 mM Ca(+2). Interacts with ITPR1 in the secretory granules. In terms of processing, O-glycosylated; contains chondroitin sulfate (CS). CS attachment is pH-dependent, being observed at mildly acidic conditions of pH 5 but not at neutral pH, and promotes self-assembly in vitro. As to expression, expressed in the brain and adrenal and pituitary glands.

It is found in the cytoplasmic vesicle. It localises to the secretory vesicle. Its subcellular location is the neuronal dense core vesicle. The protein resides in the secreted. Its function is as follows. Strongly inhibits glucose induced insulin release from the pancreas. In terms of biological role, catestatin inhibits catecholamine release from chromaffin cells and noradrenergic neurons by acting as a non-competitive nicotinic cholinergic antagonist. Can induce mast cell migration, degranulation and production of cytokines and chemokines. Functionally, serpinin regulates granule biogenesis in endocrine cells by up-regulating the transcription of protease nexin 1 (SERPINE2) via a cAMP-PKA-SP1 pathway. This leads to inhibition of granule protein degradation in the Golgi complex which in turn promotes granule formation. Serpinin and pGlu-serpinin can enhance both myocardial contractility (inotropy) and relaxation (lusitropy) and this cardio-stimulation requires a beta 1-adrenergic receptor/adenylate cyclase/cAMP/PKA pathway. The protein is Chromogranin-A (Chga) of Rattus norvegicus (Rat).